The primary structure comprises 270 residues: tRNA pseudouridine synthase A (270 aa).

Asp-60 serves as the catalytic Nucleophile. The segment at 107-111 is RNA binding; the sequence is FHARF. Residue Tyr-118 coordinates substrate. An interaction with tRNA region spans residues 168 to 172; sequence QCQSR.

Belongs to the tRNA pseudouridine synthase TruA family. In terms of assembly, homodimer.

The catalysed reaction is uridine(38/39/40) in tRNA = pseudouridine(38/39/40) in tRNA. In terms of biological role, formation of pseudouridine at positions 38, 39 and 40 in the anticodon stem and loop of transfer RNAs. The chain is tRNA pseudouridine synthase A from Shigella sonnei (strain Ss046).